We begin with the raw amino-acid sequence, 296 residues long: Thymidylate synthase (296 aa).

DUMP is bound by residues Arg-24 and 151-152 (RR). Cys-171 functions as the Nucleophile in the catalytic mechanism. DUMP-binding positions include 197–200 (RSAD), Asn-208, and 238–240 (HVY). Asp-200 contributes to the (6R)-5,10-methylene-5,6,7,8-tetrahydrofolate binding site.

It belongs to the thymidylate synthase family. Homodimer.

It catalyses the reaction dUMP + (6R)-5,10-methylene-5,6,7,8-tetrahydrofolate = 7,8-dihydrofolate + dTMP. It participates in pyrimidine metabolism; dTTP biosynthesis. This chain is Thymidylate synthase (tms1), found in Agaricus bisporus (White button mushroom).